We begin with the raw amino-acid sequence, 383 residues long: tRNA-specific 2-thiouridylase MnmA (383 aa).

ATP-binding positions include 30-37 and L56; that span reads GLSGGVDS. C117 functions as the Nucleophile in the catalytic mechanism. C117 and C216 are disulfide-bonded. An ATP-binding site is contributed by G142. The interaction with tRNA stretch occupies residues 166-168; the sequence is KDQ. Residue C216 is the Cysteine persulfide intermediate of the active site. Residues 321–322 are interaction with tRNA; the sequence is RY.

Belongs to the MnmA/TRMU family.

The protein localises to the cytoplasm. It catalyses the reaction S-sulfanyl-L-cysteinyl-[protein] + uridine(34) in tRNA + AH2 + ATP = 2-thiouridine(34) in tRNA + L-cysteinyl-[protein] + A + AMP + diphosphate + H(+). In terms of biological role, catalyzes the 2-thiolation of uridine at the wobble position (U34) of tRNA, leading to the formation of s(2)U34. The polypeptide is tRNA-specific 2-thiouridylase MnmA (Synechococcus sp. (strain CC9605)).